The primary structure comprises 177 residues: N5-carboxyaminoimidazole ribonucleotide mutase (177 aa).

Residues Ser18, Asp21, and Arg48 each coordinate substrate.

The protein belongs to the AIR carboxylase family. Class I subfamily.

The enzyme catalyses 5-carboxyamino-1-(5-phospho-D-ribosyl)imidazole + H(+) = 5-amino-1-(5-phospho-D-ribosyl)imidazole-4-carboxylate. The protein operates within purine metabolism; IMP biosynthesis via de novo pathway; 5-amino-1-(5-phospho-D-ribosyl)imidazole-4-carboxylate from 5-amino-1-(5-phospho-D-ribosyl)imidazole (N5-CAIR route): step 2/2. In terms of biological role, catalyzes the conversion of N5-carboxyaminoimidazole ribonucleotide (N5-CAIR) to 4-carboxy-5-aminoimidazole ribonucleotide (CAIR). The protein is N5-carboxyaminoimidazole ribonucleotide mutase of Pyrococcus horikoshii (strain ATCC 700860 / DSM 12428 / JCM 9974 / NBRC 100139 / OT-3).